Here is a 482-residue protein sequence, read N- to C-terminus: Hydroxymethylglutaryl-CoA synthase A (482 aa).

Residue glutamate 85 is the Proton donor/acceptor of the active site. Cysteine 119 functions as the Acyl-thioester intermediate in the catalytic mechanism. The (3S)-3-hydroxy-3-methylglutaryl-CoA site is built by cysteine 119, threonine 161, serine 211, histidine 249, lysine 258, asparagine 325, and serine 358. Catalysis depends on histidine 249, which acts as the Proton donor/acceptor.

It belongs to the thiolase-like superfamily. HMG-CoA synthase family.

It catalyses the reaction acetoacetyl-CoA + acetyl-CoA + H2O = (3S)-3-hydroxy-3-methylglutaryl-CoA + CoA + H(+). It participates in metabolic intermediate biosynthesis; (R)-mevalonate biosynthesis; (R)-mevalonate from acetyl-CoA: step 2/3. Condenses acetyl-CoA with acetoacetyl-CoA to form HMG-CoA, which is the substrate for HMG-CoA reductase. This chain is Hydroxymethylglutaryl-CoA synthase A (hgsA), found in Dictyostelium discoideum (Social amoeba).